A 352-amino-acid polypeptide reads, in one-letter code: MRRLVRACYTGTGGYSYAKKADDVAREHGFDRVARLASNENPRPPSPAALEAATVALREVNRYPDERTSVLVEALRRYHGDYRFVTGSGMDGVIETVIRTVVEPGETMVVSTPTFSFYGIAAAAHGARVVNVPRREDFSVDTGAFIDACHGAKLAFLCSPNNPTGNSVPPEDVEAILEGMDGLLFLDNAYVDFADTDYRPLMRRYENLVIGRTMSKIFALAGLRVGYAFVPEWLEPFYQRAATPFALNSVSMAAAGGALADTERVRETRDHVREWRRRFLEEVPFRVYPSDANFVMIDVDPHTGDEAVARLAAKGVLVRSCTSFPGLGNHYIRVCIGEDWENIRFLEAIKNL.

The residue at position 216 (K216) is an N6-(pyridoxal phosphate)lysine.

The protein belongs to the class-II pyridoxal-phosphate-dependent aminotransferase family. Histidinol-phosphate aminotransferase subfamily. Pyridoxal 5'-phosphate is required as a cofactor.

It catalyses the reaction L-histidinol phosphate + 2-oxoglutarate = 3-(imidazol-4-yl)-2-oxopropyl phosphate + L-glutamate. Its pathway is amino-acid biosynthesis; L-histidine biosynthesis; L-histidine from 5-phospho-alpha-D-ribose 1-diphosphate: step 7/9. In Methanoculleus marisnigri (strain ATCC 35101 / DSM 1498 / JR1), this protein is Histidinol-phosphate aminotransferase.